A 507-amino-acid polypeptide reads, in one-letter code: ATP synthase subunit alpha, chloroplastic (507 aa).

170–177 (GDRQTGKT) lines the ATP pocket.

The protein belongs to the ATPase alpha/beta chains family. In terms of assembly, F-type ATPases have 2 components, CF(1) - the catalytic core - and CF(0) - the membrane proton channel. CF(1) has five subunits: alpha(3), beta(3), gamma(1), delta(1), epsilon(1). CF(0) has four main subunits: a, b, b' and c.

The protein resides in the plastid. It localises to the chloroplast thylakoid membrane. It catalyses the reaction ATP + H2O + 4 H(+)(in) = ADP + phosphate + 5 H(+)(out). In terms of biological role, produces ATP from ADP in the presence of a proton gradient across the membrane. The alpha chain is a regulatory subunit. The protein is ATP synthase subunit alpha, chloroplastic of Nicotiana sylvestris (Wood tobacco).